Reading from the N-terminus, the 538-residue chain is CTP synthase (538 aa).

The segment at M1 to G269 is amidoligase domain. S15 is a binding site for CTP. S15 lines the UTP pocket. Position 16–21 (S16–L21) interacts with ATP. Position 56 (Y56) interacts with L-glutamine. ATP is bound at residue D73. D73 and E143 together coordinate Mg(2+). Residues D150–E152, K190–Q195, and K226 contribute to the CTP site. UTP contacts are provided by residues K190–Q195 and K226. The Glutamine amidotransferase type-1 domain maps to K294 to G538. G358 serves as a coordination point for L-glutamine. C385 acts as the Nucleophile; for glutamine hydrolysis in catalysis. Residues F386–Q389, E409, and R466 contribute to the L-glutamine site. Residues H512 and E514 contribute to the active site.

The protein belongs to the CTP synthase family. In terms of assembly, homotetramer.

The catalysed reaction is UTP + L-glutamine + ATP + H2O = CTP + L-glutamate + ADP + phosphate + 2 H(+). It carries out the reaction L-glutamine + H2O = L-glutamate + NH4(+). It catalyses the reaction UTP + NH4(+) + ATP = CTP + ADP + phosphate + 2 H(+). It functions in the pathway pyrimidine metabolism; CTP biosynthesis via de novo pathway; CTP from UDP: step 2/2. Allosterically activated by GTP, when glutamine is the substrate; GTP has no effect on the reaction when ammonia is the substrate. The allosteric effector GTP functions by stabilizing the protein conformation that binds the tetrahedral intermediate(s) formed during glutamine hydrolysis. Inhibited by the product CTP, via allosteric rather than competitive inhibition. In terms of biological role, catalyzes the ATP-dependent amination of UTP to CTP with either L-glutamine or ammonia as the source of nitrogen. Regulates intracellular CTP levels through interactions with the four ribonucleotide triphosphates. This chain is CTP synthase, found in Aeropyrum pernix (strain ATCC 700893 / DSM 11879 / JCM 9820 / NBRC 100138 / K1).